The primary structure comprises 547 residues: Ganoderic acid synthetase CYP5150L8 (547 aa).

Residues P2 to F22 traverse the membrane as a helical segment. C487 lines the heme pocket.

This sequence belongs to the cytochrome P450 family. The cofactor is heme.

Its subcellular location is the membrane. It catalyses the reaction lanosterol + reduced [NADPH--hemoprotein reductase] + O2 = 26-hydroxylanosterol + oxidized [NADPH--hemoprotein reductase] + H2O + H(+). The enzyme catalyses 26-hydroxylanosterol + reduced [NADPH--hemoprotein reductase] + O2 = 26-oxolanosterol + oxidized [NADPH--hemoprotein reductase] + 2 H2O + H(+). It carries out the reaction 26-oxolanosterol + reduced [NADPH--hemoprotein reductase] + O2 = 3beta-hydroxy-lanosta-8, 24-dien-26-oate + oxidized [NADPH--hemoprotein reductase] + H2O + 2 H(+). It participates in secondary metabolite biosynthesis; terpenoid biosynthesis. In terms of biological role, cytochrome P450 monooxygenase that is involved in the biosynthesis of ganoderic acids (GA), a group of highly oxygenated lanostane-type triterpenoids which well recognized as a main group of unique bioactive compounds in the medicinal mushroom Ganoderma lucidum. CYP5150L8 alone is able to catalyze the three-step oxidations at C-26 from lanosterol to 3-hydroxy-lanosta-8,24-dien-26-oic acid (also called ganoderic acid Z or HLDOA). The methyl group of lanosterol at C-26 is first oxidized into hydroxyl group to form 3-hydroxy-lanosta-8,24-dien-26-ol (HLDO). The hydroxyl group at C-26 of HLDO is further converted into a formyl group to form 3-hydroxy-lanosta-8,24-dien-26-al (HLDA). Finally, the formyl group is oxidized into a carboxyl group to produce 3-hydroxy-lanosta-8,24-dien-26-oic acid (HLDOA). This chain is Ganoderic acid synthetase CYP5150L8, found in Ganoderma lucidum (Ling zhi medicinal fungus).